Consider the following 279-residue polypeptide: GATA transcription factor 15 (279 aa).

Positions 52–94 (AYDDHSTVTTSPSSPSSSSTGSVDCTLSLGTPSSRRAEPVAAA) are disordered. Over residues 58–74 (TVTTSPSSPSSSSTGSV) the composition is skewed to low complexity. Residues 154 to 179 (CANCGTASTPLWRNGPRGPKSLCNAC) form a GATA-type zinc finger.

This sequence belongs to the type IV zinc-finger family. Class B subfamily. In terms of tissue distribution, highly expressed in inflorescences. Expressed in vascular bundles of root stele within the elongation zones, of elongating upper internodes and of the junctions of leaf blades and sheaths.

Functionally, probable transcription factor that regulates organogenesis during transition from the vegetative to the reproductive phase. Regulates the expression of CYP78A11/PLA1, HD3A and MADS1 during reproductive development in rice. May act upstream of CYP78A11/PLA1 during panicle development. Acts independently of the photoperiodic and gibberellin signaling pathways. This chain is GATA transcription factor 15, found in Oryza sativa subsp. japonica (Rice).